The chain runs to 227 residues: 27 kDa A-type inclusion protein (227 aa).

Positions 4 to 210 (MPKQREMRRL…AECRRGNNGS (207 aa)) form a coiled coil.

This chain is 27 kDa A-type inclusion protein, found in Bos taurus (Bovine).